The primary structure comprises 312 residues: Olfactory receptor-like protein COR2 (312 aa).

The Extracellular segment spans residues 1-26 (MASGNCTTPTTFILSGLTDNPRLQMP). N5 carries N-linked (GlcNAc...) asparagine glycosylation. The helical transmembrane segment at 27–49 (LFMVFLVIYTTTLLTNLGLIALI) threads the bilayer. Topologically, residues 50 to 57 (GMDLHLQT) are cytoplasmic. Residues 58-79 (PMYIFLQNLSFTDAAYSTVITP) traverse the membrane as a helical segment. Over 80 to 100 (KMLATFLEERRTISYVGCILQ) the chain is Extracellular. C97 and C179 are oxidised to a cystine. A helical membrane pass occupies residues 101–120 (YFSFVLLTTSEWLLLAVMAY). Residues 121–139 (DRYVAICKPLLYPSIMTKA) are Cytoplasmic-facing. A helical membrane pass occupies residues 140-164 (VCWRLVKGLYSLAFLNSLVHTSGLL). Residues 165–205 (KLSFCSSNVVNHFFCDNRPLFQISSSSTTLNELLVIISGSL) lie on the Extracellular side of the membrane. A helical membrane pass occupies residues 206-226 (FVMSSIITILISYVFIILTVV). At 227–239 (MIRSKDGKYKAFS) the chain is on the cytoplasmic side. Residues 240 to 260 (TCTSHLMAVSLFHGTVIFMYL) traverse the membrane as a helical segment. Over 261 to 271 (RSVKLFSLDTD) the chain is Extracellular. The helical transmembrane segment at 272–292 (KIASLFYTVVIPMLNPLIYSW) threads the bilayer. At 293–312 (RNKEVKDALRRLTATSVWLH) the chain is on the cytoplasmic side.

The protein belongs to the G-protein coupled receptor 1 family.

The protein resides in the cell membrane. Odorant receptor. This chain is Olfactory receptor-like protein COR2 (COR2), found in Gallus gallus (Chicken).